Here is a 162-residue protein sequence, read N- to C-terminus: UPF0262 protein Pden_1958 (162 aa).

A disordered region spans residues 1–22; sequence MSQSANRLCRIDIDDSALPPPS.

The protein belongs to the UPF0262 family.

This chain is UPF0262 protein Pden_1958, found in Paracoccus denitrificans (strain Pd 1222).